Here is a 317-residue protein sequence, read N- to C-terminus: Malate dehydrogenase (317 aa).

Residues 7–13 (GAAGGIG) and D34 each bind NAD(+). Substrate contacts are provided by R81 and R87. Residues N94 and 117-119 (VTN) contribute to the NAD(+) site. N119 and R153 together coordinate substrate. Residue H177 is the Proton acceptor of the active site. Residue M231 participates in NAD(+) binding.

Belongs to the LDH/MDH superfamily. MDH type 1 family. As to quaternary structure, homodimer.

The enzyme catalyses (S)-malate + NAD(+) = oxaloacetate + NADH + H(+). In terms of biological role, catalyzes the reversible oxidation of malate to oxaloacetate. The chain is Malate dehydrogenase from Actinobacillus pleuropneumoniae serotype 7 (strain AP76).